Here is a 100-residue protein sequence, read N- to C-terminus: Elastin (100 aa).

A 4-hydroxyproline mark is found at proline 72 and proline 86. Cysteines 90 and 95 form a disulfide.

The protein belongs to the elastin family. The polymeric elastin chains are cross-linked together into an extensible 3D network. Forms a ternary complex with BGN and MFAP2. Interacts with MFAP2 via divalent cations (calcium &gt; magnesium &gt; manganese) in a dose-dependent and saturating manner. Interacts with FBLN5 and FBN1. Forms a ternary complex with FBN1 and FBLN2 or FBLN5. Interacts with MFAP4 in a Ca (2+)-dependent manner; this interaction promotes ELN self-assembly. Interacts with EFEMP2 with moderate affinity. In terms of processing, elastin is formed through the cross-linking of its soluble precursor tropoelastin. Cross-linking is initiated through the action of lysyl oxidase on exposed lysines to form allysine. Subsequent spontaneous condensation reactions with other allysine or unmodified lysine residues result in various bi-, tri-, and tetrafunctional cross-links. The most abundant cross-links in mature elastin fibers are lysinonorleucine, allysine aldol, desmosine, and isodesmosine. Post-translationally, hydroxylation on proline residues within the sequence motif, GXPG, is most likely to be 4-hydroxy as this fits the requirement for 4-hydroxylation in vertebrates.

Its subcellular location is the secreted. The protein resides in the extracellular space. It localises to the extracellular matrix. Functionally, major structural protein of tissues such as aorta and nuchal ligament, which must expand rapidly and recover completely. Molecular determinant of the late arterial morphogenesis, stabilizing arterial structure by regulating proliferation and organization of vascular smooth muscle. This is Elastin (ELN) from Ovis aries (Sheep).